The sequence spans 387 residues: Zinc homeostasis factor 1 (387 aa).

Helical transmembrane passes span 10 to 30 (IILLLGIDVTFFFIEIITGYA), 34 to 54 (LALIADSFHMLNDIVSLLVAL), 77 to 97 (EILGALSNGVFLIALCMFIFM), and 113 to 133 (TLMFFVGSLGLLSNFVGIFLF). A compositionally biased stretch (polar residues) spans 195–214 (SYTGNHNGAGTSKPVNNHGS). The tract at residues 195–221 (SYTGNHNGAGTSKPVNNHGSIEQDAPK) is disordered. The next 2 helical transmembrane spans lie at 234 to 254 (FLHVLGDALGNIGVISAALFI) and 263 to 283 (FLFDPCISILLTFIILFSAIP).

It belongs to the cation diffusion facilitator (CDF) transporter (TC 2.A.4) family. SLC30A subfamily.

It localises to the endoplasmic reticulum membrane. It is found in the nucleus membrane. In terms of biological role, involved in zinc homeostasis, where it plays a role in its accumulation in the endoplasmic reticulum/nucleus. Also has a role in the sequestration of cadmium into the endoplasmic reticulum. The polypeptide is Zinc homeostasis factor 1 (zhf1) (Schizosaccharomyces pombe (strain 972 / ATCC 24843) (Fission yeast)).